A 186-amino-acid chain; its full sequence is Outer-membrane lipoprotein LolB (186 aa).

The signal sequence occupies residues 1–16 (MRRLAVIASLAWALGG). Residue Cys17 is the site of N-palmitoyl cysteine attachment. Cys17 is lipidated: S-diacylglycerol cysteine.

Belongs to the LolB family. In terms of assembly, monomer.

It is found in the cell outer membrane. In terms of biological role, plays a critical role in the incorporation of lipoproteins in the outer membrane after they are released by the LolA protein. The sequence is that of Outer-membrane lipoprotein LolB from Thiobacillus denitrificans (strain ATCC 25259 / T1).